Reading from the N-terminus, the 650-residue chain is MGKIIGIDLGTTNSCVAIMEGNQVKVIENSEGTRTTPSIIAYMDDNEVLVGAPAKRQSVTNPRNTLFAVKRLIGRRFEEKEVQKDIGLMPYAIIKADNGDAWVEAHGEKLAPPQVSAEVLRKMKKTAEDYLGEPVTEAVITVPAYFNDSQRQATKDAGRIAGLEVKRIINEPTAAALAFGLDKAEKGDRKIAVYDLGGGTFDVSIIEIADVDGEMQFEVLSTNGDTFLGGEDFDQRIIDYIIGEFKKEQGVDLSKDVLALQRLKEAAEKAKIELSSSQQTEINLPYITADASGPKHLNLKITRAKLEALVEDLVERTIEPCRIAIKDAGVKVSDIDDVILVGGQTRMPKVQEKVKEFFGKDPRRDVNPDEAVAVGAAIQGQVLSGDRKDVLLLDVTPLSLGIETLGGVMTKMISKNTTIPTKHAQVYSTADDNQSAVTIKVFQGEREMAAGNKLLGEFNLEGIPPSPRGVPQIEVTFDIDANGILHVGAKDKATGKENKITIKANSGLTDAEIDQMIKDAEANAAEDHKLRELADSRNQGDALVHSTKKALTEYGDKLDAGEKEKIEAALKSLEDALKDTSADKATIDAKVEELGQVSQKLGEKMYADMQAQQAGAAGAAGAAEGAAHAGGAQQAADDVVDAEFKEVKKD.

A Phosphothreonine; by autocatalysis modification is found at Thr200. Positions 611–636 (AQQAGAAGAAGAAEGAAHAGGAQQAA) are enriched in low complexity. The tract at residues 611-637 (AQQAGAAGAAGAAEGAAHAGGAQQAAD) is disordered.

The protein belongs to the heat shock protein 70 family.

Acts as a chaperone. This Burkholderia ambifaria (strain MC40-6) protein is Chaperone protein DnaK.